The following is a 315-amino-acid chain: tRNA dimethylallyltransferase (315 aa).

Residue 14 to 21 (GPTASGKT) participates in ATP binding. Residue 16 to 21 (TASGKT) coordinates substrate. 3 interaction with substrate tRNA regions span residues 39 to 42 (DSAL), 163 to 167 (QRIQR), and 248 to 253 (RCVGYR).

This sequence belongs to the IPP transferase family. Monomer. Mg(2+) serves as cofactor.

The enzyme catalyses adenosine(37) in tRNA + dimethylallyl diphosphate = N(6)-dimethylallyladenosine(37) in tRNA + diphosphate. Its function is as follows. Catalyzes the transfer of a dimethylallyl group onto the adenine at position 37 in tRNAs that read codons beginning with uridine, leading to the formation of N6-(dimethylallyl)adenosine (i(6)A). The sequence is that of tRNA dimethylallyltransferase from Paraburkholderia xenovorans (strain LB400).